The chain runs to 1083 residues: RecBCD enzyme subunit RecB (1083 aa).

The region spanning 1–323 is the UvrD-like helicase ATP-binding domain; it reads MKVFDLLGPL…QTLGTNWRSD (323 aa). The segment at 1–704 is DNA-binding and helicase activity, interacts with RecC; sequence MKVFDLLGPL…RGRAPGEAIV (704 aa). 21–28 lines the ATP pocket; that stretch reads ASAGTGKT. Positions 349 to 607 constitute a UvrD-like helicase C-terminal domain; that stretch reads VQARHQGHRL…QIMTVWVSKG (259 aa). The nuclease activity, interacts with RecD and RecA stretch occupies residues 765 to 1083; that stretch reads AWKRTSYSGL…LSKLLDAEAP (319 aa). Positions 830, 962, and 975 each coordinate Mg(2+). D975 functions as the For nuclease activity in the catalytic mechanism.

It belongs to the helicase family. UvrD subfamily. In terms of assembly, heterotrimer of RecB, RecC and RecD. All subunits contribute to DNA-binding. Interacts with RecA. Requires Mg(2+) as cofactor.

It catalyses the reaction Exonucleolytic cleavage (in the presence of ATP) in either 5'- to 3'- or 3'- to 5'-direction to yield 5'-phosphooligonucleotides.. The enzyme catalyses Couples ATP hydrolysis with the unwinding of duplex DNA by translocating in the 3'-5' direction.. The catalysed reaction is ATP + H2O = ADP + phosphate + H(+). In terms of biological role, a helicase/nuclease that prepares dsDNA breaks (DSB) for recombinational DNA repair. Binds to DSBs and unwinds DNA via a highly rapid and processive ATP-dependent bidirectional helicase activity. Holoenzyme degrades any linearized DNA that is unable to undergo homologous recombination. In the holoenzyme this subunit contributes DNA-dependent ATPase activity, exonuclease activity and 3'-5' helicase activity. Unlike the case in E.coli, suppresses RecA-dependent homologous recombination, is instead required for single-strand annealing pathway repair of DSB. This is RecBCD enzyme subunit RecB from Mycolicibacterium smegmatis (strain ATCC 700084 / mc(2)155) (Mycobacterium smegmatis).